Consider the following 108-residue polypeptide: UPF0145 protein LCA_1282 (108 aa).

The protein belongs to the UPF0145 family.

This chain is UPF0145 protein LCA_1282, found in Latilactobacillus sakei subsp. sakei (strain 23K) (Lactobacillus sakei subsp. sakei).